The following is a 520-amino-acid chain: ADP,ATP carrier protein 4 (520 aa).

The next 12 helical transmembrane spans lie at 43–63 (LSKFLFITLLMFCILFIQNLI), 80–100 (ISFLKFWGVMPCAFLMTAIYV), 111–131 (IFYLIISIFLAFFALFAYVIF), 166–186 (FSLFYIIAELWPNVAFALLFW), 201–221 (FYPLFGLLSQTGIYLAGQFLE), 240–260 (FHTLSVQIILTIVLILGIVGI), 305–325 (LIATLLICYGIAINLVEGPWK), 339–359 (AAFIGNYLSYTGAFTILFVVL), 370–390 (FTAAIITPIIVFTTGILFFAV), 399–419 (LIVASFILTDPALIAITIGAI), 462–482 (LGKSGSAFLQSLVFIILPSAS), and 485–505 (SISVCLMFIFIITCLIWFWAV).

The protein belongs to the ADP/ATP translocase tlc family.

It is found in the cell membrane. In terms of biological role, provides the rickettsial cell with host ATP in exchange for rickettsial ADP. This is an obligate exchange system. This energy acquiring activity is an important component of rickettsial parasitism. The chain is ADP,ATP carrier protein 4 (tlcD) from Rickettsia bellii (strain RML369-C).